Reading from the N-terminus, the 54-residue chain is Small ribosomal subunit protein uS14 (54 aa).

Zn(2+)-binding residues include Cys-19, Cys-22, Cys-37, and Cys-40.

The protein belongs to the universal ribosomal protein uS14 family. Zinc-binding uS14 subfamily. As to quaternary structure, part of the 30S ribosomal subunit. The cofactor is Zn(2+).

Its function is as follows. Binds 16S rRNA, required for the assembly of 30S particles. This chain is Small ribosomal subunit protein uS14, found in Aeropyrum pernix (strain ATCC 700893 / DSM 11879 / JCM 9820 / NBRC 100138 / K1).